The primary structure comprises 93 residues: Integration host factor subunit beta (93 aa).

It belongs to the bacterial histone-like protein family. Heterodimer of an alpha and a beta chain.

This protein is one of the two subunits of integration host factor, a specific DNA-binding protein that functions in genetic recombination as well as in transcriptional and translational control. In Vibrio vulnificus (strain YJ016), this protein is Integration host factor subunit beta.